A 205-amino-acid chain; its full sequence is Cytochrome c oxidase subunit 3 (205 aa).

5 consecutive transmembrane segments (helical) span residues 28-48 (GTIV…AMYF), 72-92 (ALVI…GVFA), 104-124 (WFSL…YEYF), 142-162 (FFIT…AFVV), and 184-204 (SYYW…IYFI).

Belongs to the cytochrome c oxidase subunit 3 family. In terms of assembly, associates with subunits I, II and IV to form cytochrome c oxidase.

The protein localises to the cell membrane. The enzyme catalyses 4 Fe(II)-[cytochrome c] + O2 + 8 H(+)(in) = 4 Fe(III)-[cytochrome c] + 2 H2O + 4 H(+)(out). The sequence is that of Cytochrome c oxidase subunit 3 (ctaE) from Corynebacterium diphtheriae (strain ATCC 700971 / NCTC 13129 / Biotype gravis).